Consider the following 396-residue polypeptide: Elongation factor Tu (396 aa).

In terms of domain architecture, tr-type G spans 10 to 206; it reads KPHCNIGTIG…QVDAYIPQPE (197 aa). The G1 stretch occupies residues 19 to 26; sequence GHVDHGKT. Position 19-26 (19-26) interacts with GTP; it reads GHVDHGKT. Position 26 (Thr26) interacts with Mg(2+). The tract at residues 60 to 64 is G2; it reads GITIS. Positions 81-84 are G3; sequence DCPG. Residues 81 to 85 and 136 to 139 each bind GTP; these read DCPGH and NKCD. The tract at residues 136 to 139 is G4; the sequence is NKCD. The tract at residues 174–176 is G5; it reads SAL.

The protein belongs to the TRAFAC class translation factor GTPase superfamily. Classic translation factor GTPase family. EF-Tu/EF-1A subfamily. Monomer.

Its subcellular location is the cytoplasm. It carries out the reaction GTP + H2O = GDP + phosphate + H(+). Its function is as follows. GTP hydrolase that promotes the GTP-dependent binding of aminoacyl-tRNA to the A-site of ribosomes during protein biosynthesis. The polypeptide is Elongation factor Tu (Rhodopseudomonas palustris (strain ATCC BAA-98 / CGA009)).